Reading from the N-terminus, the 362-residue chain is Peptide chain release factor 1 (362 aa).

Q236 bears the N5-methylglutamine mark.

This sequence belongs to the prokaryotic/mitochondrial release factor family. Methylated by PrmC. Methylation increases the termination efficiency of RF1.

It is found in the cytoplasm. Its function is as follows. Peptide chain release factor 1 directs the termination of translation in response to the peptide chain termination codons UAG and UAA. This is Peptide chain release factor 1 from Lactobacillus johnsonii (strain CNCM I-12250 / La1 / NCC 533).